Consider the following 351-residue polypeptide: Silk gland factor 3 (351 aa).

Disordered stretches follow at residues 61–88 (ADPW…HDHR) and 131–154 (SSPR…TPTS). Residues 135–145 (DPLHHHAMERD) are compositionally biased toward basic and acidic residues. In terms of domain architecture, POU-specific spans 149–223 (EDTPTSDDLE…LLQKWLEEAD (75 aa)). The segment at residues 241 to 300 (KRKKRTSIEVSVKGALEQHFHKQPKPSAQEITSLADSLQLEKEVVRVWFCNRRQKEKRMT) is a DNA-binding region (homeobox). Residues 314–351 (GHAHYGHGDVHGSPLQHSPPGLSPQHGLPQGAHTLAAH) are disordered.

This sequence belongs to the POU transcription factor family. Class-3 subfamily. In terms of tissue distribution, restricted to the middle silk gland.

The protein resides in the nucleus. Its function is as follows. Involved in the transcriptional regulation of sericin-1 gene. This chain is Silk gland factor 3 (SGF3), found in Bombyx mori (Silk moth).